The sequence spans 2325 residues: Protein sidekick homolog (2325 aa).

The first 26 residues, 1-26, serve as a signal peptide directing secretion; the sequence is MRNRLLLIFYTTTVLWTIGYTQLVLG. The Extracellular portion of the chain corresponds to 27 to 2019; it reads KPPIFQDGGS…IPDDPFYTTW (1993 aa). 3 Ig-like C2-type domains span residues 28–105, 217–319, and 324–397; these read PPIF…AAIS, PSLQ…AYMT, and PILK…ADLA. Intrachain disulfides connect Cys-52/Cys-94, Cys-247/Cys-301, and Cys-345/Cys-386. Asn-407 carries N-linked (GlcNAc...) asparagine glycosylation. 2 Ig-like C2-type domains span residues 456–544 and 547–638; these read PSQK…VQVN and SLIE…AMLQ. 2 cysteine pairs are disulfide-bonded: Cys-480–Cys-528 and Cys-568–Cys-622. N-linked (GlcNAc...) asparagine glycosylation is found at Asn-632, Asn-655, Asn-807, Asn-868, Asn-932, and Asn-1016. Fibronectin type-III domains lie at 645 to 751, 756 to 853, 858 to 957, 961 to 1055, 1059 to 1154, 1159 to 1254, 1259 to 1359, 1363 to 1457, 1463 to 1566, 1571 to 1671, 1673 to 1775, 1776 to 1872, and 1873 to 2004; these read MPER…MPQQ, APRN…TSEG, APKN…TEED, SVDE…VPPE, RPSM…TLQT, PSQR…TYES, SPRN…TMED, PPES…SSVR, APAP…TLPS, QPIS…VGYS, PKRN…DKPG, PVGI…SKDG, and PPPP…TEQL. The interval 1036–1059 is disordered; the sequence is TRKGDGPVEETKFESGVPPELPGR. The span at 1037-1048 shows a compositional bias: basic and acidic residues; it reads RKGDGPVEETKF. N-linked (GlcNAc...) asparagine glycosylation occurs at Asn-1107. Residues 1137 to 1161 are disordered; that stretch reads KGRGAPSEPSRSFETLQTNPDTPSQ. Over residues 1145–1161 the composition is skewed to polar residues; sequence PSRSFETLQTNPDTPSQ. N-linked (GlcNAc...) asparagine glycosylation occurs at Asn-1614. Disordered regions lie at residues 1857 to 1884 and 1918 to 1947; these read GEQRSANVTIGPSKDGPPPPSKPQITSG and PANGYVSQRPRRNEIKGAKSAAQTAAATST. A glycan (N-linked (GlcNAc...) asparagine) is linked at Asn-1863. Low complexity predominate over residues 1935 to 1947; the sequence is AKSAAQTAAATST. The helical transmembrane segment at 2020–2040 threads the bilayer; it reads WFMALVAMGAFVLIVIIIAIL. Residues 2041 to 2325 are Cytoplasmic-facing; that stretch reads CVTGSSAKYR…NLTTGFSSFV (285 aa). Disordered regions lie at residues 2080–2113, 2164–2187, 2202–2226, and 2285–2325; these read NMTRSRELPTRPGTTQSWVSDQSREPPAYGSVLG, TAYVTPSARGGSDNGRNEYMPTRS, RGHIPSSSGGSGAGSQPQGSPLQQP, and ILTG…SSFV. Positions 2091 to 2100 are enriched in polar residues; the sequence is PGTTQSWVSD. Over residues 2215–2226 the composition is skewed to low complexity; it reads GSQPQGSPLQQP. Composition is skewed to polar residues over residues 2294–2305 and 2313–2325; these read AGRSSTTDSTSE and ATPNLTTGFSSFV.

The protein belongs to the sidekick family.

It localises to the membrane. Cell adhesion protein. The protein is Protein sidekick homolog (rig-4) of Caenorhabditis elegans.